We begin with the raw amino-acid sequence, 183 residues long: Peptidyl-prolyl cis-trans isomerase H (183 aa).

Residues 19-182 (FFDVALGGEP…QDVVIIQCGE (164 aa)) enclose the PPIase cyclophilin-type domain.

It belongs to the cyclophilin-type PPIase family. PPIase H subfamily.

The protein localises to the nucleus. It carries out the reaction [protein]-peptidylproline (omega=180) = [protein]-peptidylproline (omega=0). PPIases accelerate the folding of proteins. It catalyzes the cis-trans isomerization of proline imidic peptide bonds in oligopeptides. The chain is Peptidyl-prolyl cis-trans isomerase H (cyp3) from Emericella nidulans (strain FGSC A4 / ATCC 38163 / CBS 112.46 / NRRL 194 / M139) (Aspergillus nidulans).